Reading from the N-terminus, the 959-residue chain is DEAD-box ATP-dependent RNA helicase rde-12 (959 aa).

The interval 1–336 (MSSFGNNAGG…EGVNAPVRAP (336 aa)) is disordered. A compositionally biased stretch (basic and acidic residues) spans 71 to 97 (GRREDDRSHSRDNHGGSRYGERDDRGN). Over residues 98–118 (NGRSADNRYSQSNYNYDSNRG) the composition is skewed to polar residues. A compositionally biased stretch (basic and acidic residues) spans 122 to 134 (YQRDNHGSKDDRG). The span at 137–160 (NQYNDHGSNHNSNSRNDQYRQGSY) shows a compositional bias: polar residues. 2 stretches are compositionally biased toward basic and acidic residues: residues 166 to 181 (SGYR…DNDQ) and 189 to 201 (RDSD…DHHN). Residues 202-213 (YNSQSSPRSHQG) show a composition bias toward polar residues. Basic and acidic residues-rich tracts occupy residues 219–239 (SAPK…HDSY) and 255–270 (YRND…DHRS). Positions 271–280 (GGNNSSSGFK) are enriched in low complexity. Residues 281-301 (NDGGFGGNDNRGFGNNGGGSF) are compositionally biased toward gly residues. A compositionally biased stretch (low complexity) spans 302–317 (GNPNNSYRGNSNNIGG). The Q motif motif lies at 380–408 (TSWTNSGLHPTILETLKRIKYNNVRTIQG). One can recognise a Helicase ATP-binding domain in the interval 411–599 (IPQVLDGHDV…NELMKRLPGQ (189 aa)). 424-431 (AETSAGKT) is a binding site for ATP. Residues 539–542 (DEAD) carry the DEAD box motif. Residues 632-792 (KLREILKQNV…KVPDFLDAMA (161 aa)) enclose the Helicase C-terminal domain. Disordered regions lie at residues 793–834 (KSSR…GGGR) and 858–959 (GGGG…DDEW). Gly residues-rich tracts occupy residues 800–834 (GTSG…GGGR) and 858–872 (GGGG…GFGG). Residues 930 to 941 (TLGSSTFGTANN) show a composition bias toward polar residues. Over residues 942 to 959 (ADEEPTETGADGNDDDEW) the composition is skewed to acidic residues.

Belongs to the DEAD box helicase family. DDX3/DED1 subfamily. In terms of assembly, interacts with wago-1, ergo-1 and rde-1. Mg(2+) is required as a cofactor. In terms of tissue distribution, expressed in the soma and germline.

Its subcellular location is the cytoplasm. The protein localises to the perinuclear region. It localises to the cytoplasmic granule. It is found in the P-body. The enzyme catalyses ATP + H2O = ADP + phosphate + H(+). Its function is as follows. Probable ATP-dependent RNA helicase involved in RNAi-mediated gene silencing. Specifically required in the endogenous siRNA pathway for biogenesis of secondary endogenous small interfering RNA (siRNA) intermediates called 22G-RNAs. May associate with and recruit rde-10 to primary siRNA-targeted mRNA for secondary siRNA synthesis. May be recruited to target mRNAs by rde-1 and/or ergo-1. The protein is DEAD-box ATP-dependent RNA helicase rde-12 of Caenorhabditis elegans.